The chain runs to 346 residues: Histidinol-phosphate aminotransferase (346 aa).

The residue at position 209 (K209) is an N6-(pyridoxal phosphate)lysine.

Belongs to the class-II pyridoxal-phosphate-dependent aminotransferase family. Histidinol-phosphate aminotransferase subfamily. In terms of assembly, homodimer. Pyridoxal 5'-phosphate is required as a cofactor.

The enzyme catalyses L-histidinol phosphate + 2-oxoglutarate = 3-(imidazol-4-yl)-2-oxopropyl phosphate + L-glutamate. It functions in the pathway amino-acid biosynthesis; L-histidine biosynthesis; L-histidine from 5-phospho-alpha-D-ribose 1-diphosphate: step 7/9. In Vibrio vulnificus (strain CMCP6), this protein is Histidinol-phosphate aminotransferase.